A 252-amino-acid polypeptide reads, in one-letter code: Ribosome maturation factor RimP (252 aa).

Residues 188-252 are disordered; it reads QGAAPGTEGG…PAAGPGAQDE (65 aa). Residues 208 to 224 are compositionally biased toward basic residues; the sequence is ARRPHQPKPKKAKKKGP.

This sequence belongs to the RimP family.

It localises to the cytoplasm. Functionally, required for maturation of 30S ribosomal subunits. The protein is Ribosome maturation factor RimP of Rhodospirillum centenum (strain ATCC 51521 / SW).